The sequence spans 912 residues: Intercellular adhesion molecule 5 (912 aa).

An N-terminal signal peptide occupies residues 1-29; sequence MPGPSPGLRALLGFWVALGLGILRLSAVA. At 30-826 the chain is on the extracellular side; the sequence is QEPFWADLQP…RITVRVAGPW (797 aa). Ig-like C2-type domains follow at residues 47–127, 132–232, 239–324, 332–395, 403–481, 486–561, 566–645, 659–734, and 738–819; these read GGSL…PLPP, GENF…RLLA, DSQS…LLTL, GKLV…NGSA, PRLD…VTLT, PALD…VAVT, PSFE…NPLG, PQMD…TVGV, and PVVA…RRIT. Asn53 is a glycosylation site (N-linked (GlcNAc...) (high mannose) asparagine). Disulfide bonds link Cys54/Cys97 and Cys58/Cys101. N-linked (GlcNAc...) asparagine glycosylation occurs at Asn134. The cysteines at positions 139 and 195 are disulfide-linked. Thr179 and Thr181 each carry phosphothreonine. N-linked (GlcNAc...) asparagine glycans are attached at residues Asn192 and Asn211. Cys246 and Cys297 are joined by a disulfide. N-linked (GlcNAc...) asparagine glycosylation is found at Asn311, Asn366, and Asn392. A disulfide bond links Cys339 and Cys378. 3 cysteine pairs are disulfide-bonded: Cys410–Cys465, Cys493–Cys546, and Cys573–Cys638. N-linked (GlcNAc...) asparagine glycans are attached at residues Asn576 and Asn639. Cys666 and Cys717 form a disulfide bridge. The interval 678–708 is disordered; the sequence is AAGPACARGRPSPRVRCSREGAPRPARPRVS. Residues Asn756, Asn787, and Asn788 are each glycosylated (N-linked (GlcNAc...) asparagine). Cys761 and Cys806 are oxidised to a cystine. Residues 827–847 traverse the membrane as a helical segment; it reads LWIAVGGAVGGAVLLAAGAGL. The Cytoplasmic portion of the chain corresponds to 848 to 912; that stretch reads AFYVQSTACK…EVFAIQLTSA (65 aa). A disordered region spans residues 880-902; it reads GGAGSGAEGGPEAEDSAESPAGG.

Belongs to the immunoglobulin superfamily. ICAM family. Post-translationally, glycosylation at Asn-53 is critical for functional folding. In terms of tissue distribution, expressed on neurons in the most rostral segment of the mammalian brain, the telencephalon.

It is found in the membrane. Functionally, ICAM proteins are ligands for the leukocyte adhesion protein LFA-1 (integrin alpha-L/beta-2). The protein is Intercellular adhesion molecule 5 (ICAM5) of Oryctolagus cuniculus (Rabbit).